Reading from the N-terminus, the 303-residue chain is Caspase-7 (303 aa).

Residues methionine 1–aspartate 27 are disordered. An N-acetylalanine modification is found at alanine 2. A propeptide spans alanine 2–aspartate 23 (N-terminally processed). Residues glutamate 10–aspartate 27 are compositionally biased toward basic and acidic residues. Serine 30 carries the phosphoserine modification. The exosite stretch occupies residues lysine 38–lysine 41. A loop L1 region spans residues lysine 76–arginine 87. Histidine 144 is an active-site residue. Threonine 173 carries the post-translational modification Phosphothreonine. The active site involves cysteine 186. A loop L2 region spans residues arginine 187 to glutamine 196. The propeptide occupies serine 199–aspartate 206. The loop L3 stretch occupies residues valine 226–glycine 238. Serine 239 is modified (phosphoserine). The tract at residues glutamate 274 to isoleucine 288 is loop L4.

It belongs to the peptidase C14A family. As to quaternary structure, heterotetramer that consists of two anti-parallel arranged heterodimers, each one formed by a 20 kDa (p20) and a 11 kDa (p11) subunit. Interacts with XIAP (via its second BIR domain); inhibiting CASP7 activity. Interacts with BIRC6/bruce. Interacts with ATXN3 (short isoform 1). Interacts with HSPA5. Post-translationally, cleavage by different proteases, such as granzyme B (GZMB), caspase-1 (CASP1), caspase-8 (CASP8) or caspase-9 (CASP9) generate the two active subunits. Its involvement in different programmed cell death processes is probably specified by the protease that activates CASP7. Cleaved and activated by initiator caspases (CASP8 and/or CASP9), leading to execution phase of apoptosis. Cleavage and maturation by GZMB regulates granzyme-mediated programmed cell death. Cleaved and activated by CASP1 in response to bacterial infection. Propeptide domains can also be cleaved efficiently by CASP3. Active heterodimers between the small subunit of caspase-7 and the large subunit of CASP3, and vice versa, also occur. Also cleaved at the N-terminus at alternative sites by CAPN1, leading to its activation. In terms of processing, phosphorylation at Ser-30 and Ser-239 by PAK2 inhibits its activity. Phosphorylation at Ser-30 prevents cleavage and activation by initiator caspase CASP9, while phosphorylation at Ser-239 prevents thiol protease activity by preventing substrate-binding. Ubiquitinated by BIRC6; this activity is inhibited by DIABLO/SMAC.

The protein resides in the cytoplasm. It localises to the cytosol. It is found in the nucleus. The protein localises to the secreted. Its subcellular location is the extracellular space. It carries out the reaction Strict requirement for an Asp residue at position P1 and has a preferred cleavage sequence of Asp-Glu-Val-Asp-|-.. During activation, the N-terminal disordered prodomain is removed by cleavage. Concomitantly, double cleavage gives rise to a large Caspase-7 subunit p20 and a small Caspase-7 subunit p11. The two large and two small subunits then assemble to form the active CASP7 complex. Can be cleaved and activated by different caspases, depending on the context. Cleaved and activated by initiator caspases (CASP8 and/or CASP9), leading to execution phase of apoptosis. Cleavage and maturation by GZMB regulates granzyme-mediated programmed cell death. Cleavage and maturation by CASP1 regulates pyroptosis. Inhibited by XIAP, which directly binds to the active site pocket and obstructs substrate entry. Phosphorylation at Ser-30 and Ser-239 by PAK2 inhibits its activity. Inhibited by BIRC6; following inhibition of BIRC6-caspase binding by DIABLO/SMAC, BIRC6 is subjected to caspase cleavage, leading to an increase in active caspases. Thiol protease involved in different programmed cell death processes, such as apoptosis, pyroptosis or granzyme-mediated programmed cell death, by proteolytically cleaving target proteins. Has a marked preference for Asp-Glu-Val-Asp (DEVD) consensus sequences, with some plasticity for alternate non-canonical sequences. Its involvement in the different programmed cell death processes is probably determined by upstream proteases that activate CASP7. Acts as an effector caspase involved in the execution phase of apoptosis: following cleavage and activation by initiator caspases (CASP8 and/or CASP9), mediates execution of apoptosis by catalyzing cleavage of proteins, such as CLSPN, PARP1, PTGES3 and YY1. Compared to CASP3, acts as a minor executioner caspase and cleaves a limited set of target proteins. Acts as a key regulator of the inflammatory response in response to bacterial infection by catalyzing cleavage and activation of the sphingomyelin phosphodiesterase SMPD1 in the extracellular milieu, thereby promoting membrane repair. Regulates pyroptosis in intestinal epithelial cells: cleaved and activated by CASP1 in response to S.typhimurium infection, promoting its secretion to the extracellular milieu, where it catalyzes activation of SMPD1, generating ceramides that repair membranes and counteract the action of gasdermin-D (GSDMD) pores. Regulates granzyme-mediated programmed cell death in hepatocytes: cleaved and activated by granzyme B (GZMB) in response to bacterial infection, promoting its secretion to the extracellular milieu, where it catalyzes activation of SMPD1, generating ceramides that repair membranes and counteract the action of perforin (PRF1) pores. Following cleavage by CASP1 in response to inflammasome activation, catalyzes processing and inactivation of PARP1, alleviating the transcription repressor activity of PARP1. Acts as an inhibitor of type I interferon production during virus-induced apoptosis by mediating cleavage of antiviral proteins CGAS, IRF3 and MAVS, thereby preventing cytokine overproduction. Cleaves and activates sterol regulatory element binding proteins (SREBPs). Cleaves phospholipid scramblase proteins XKR4, XKR8 and XKR9. Cleaves BIRC6 following inhibition of BIRC6-caspase binding by DIABLO/SMAC. The protein is Caspase-7 (CASP7) of Mesocricetus auratus (Golden hamster).